We begin with the raw amino-acid sequence, 265 residues long: Indole-3-glycerol phosphate synthase (265 aa).

This sequence belongs to the TrpC family.

It catalyses the reaction 1-(2-carboxyphenylamino)-1-deoxy-D-ribulose 5-phosphate + H(+) = (1S,2R)-1-C-(indol-3-yl)glycerol 3-phosphate + CO2 + H2O. It participates in amino-acid biosynthesis; L-tryptophan biosynthesis; L-tryptophan from chorismate: step 4/5. This chain is Indole-3-glycerol phosphate synthase, found in Xanthomonas oryzae pv. oryzae (strain MAFF 311018).